Here is a 518-residue protein sequence, read N- to C-terminus: Glucose-1-phosphate adenylyltransferase large subunit 2, cytosolic (518 aa).

This sequence belongs to the bacterial/plant glucose-1-phosphate adenylyltransferase family. As to quaternary structure, heterotetramer composed of two small and two large subunits.

Its subcellular location is the cytoplasm. It localises to the cytosol. The catalysed reaction is alpha-D-glucose 1-phosphate + ATP + H(+) = ADP-alpha-D-glucose + diphosphate. It functions in the pathway glycan biosynthesis; starch biosynthesis. With respect to regulation, activated by 3'phosphoglycerate, inhibited by orthophosphate. Allosteric regulation. Inhibited by inorganic phosphate (Pi). Its function is as follows. Involved in synthesis of starch. Catalyzes the synthesis of ADP-glucose, a molecule that serves as an activated glycosyl donor for alpha-1,4-glucan synthesis. Essential for starch synthesis in seed endosperm. Is essential for both catalytic and allosteric regulatory properties of the cytosolic heterotetramer enzyme. The polypeptide is Glucose-1-phosphate adenylyltransferase large subunit 2, cytosolic (Oryza sativa subsp. japonica (Rice)).